The following is a 376-amino-acid chain: Mitogen-activated protein kinase 5 (376 aa).

A Protein kinase domain is found at 43–329; that stretch reads VPPIRPIGRG…VEEALCYPYL (287 aa). ATP contacts are provided by residues 49-57 and K72; that span reads IGRGAYGFV. The active-site Proton acceptor is D169. Position 201 is a phosphothreonine (T201). The TXY motif lies at 201 to 203; that stretch reads TEY. Phosphotyrosine is present on Y203. T206 is subject to Phosphothreonine.

This sequence belongs to the protein kinase superfamily. CMGC Ser/Thr protein kinase family. MAP kinase subfamily. In terms of processing, autophosphorylated on threonine and tyrosine residues. Post-translationally, dually phosphorylated on Thr-201 and Tyr-203, which activates the enzyme.

It carries out the reaction L-seryl-[protein] + ATP = O-phospho-L-seryl-[protein] + ADP + H(+). It catalyses the reaction L-threonyl-[protein] + ATP = O-phospho-L-threonyl-[protein] + ADP + H(+). Activated by threonine and tyrosine phosphorylation. Activated by the MAP kinase kinase MKK2. Activated by the MAP kinase kinase MKK6 in vitro. This chain is Mitogen-activated protein kinase 5 (MPK5), found in Arabidopsis thaliana (Mouse-ear cress).